The primary structure comprises 1192 residues: Leucine-rich repeat receptor protein kinase EMS1 (1192 aa).

A signal peptide spans 1-18; sequence MAFLTALFLFLFFSFSSS. An N-linked (GlcNAc...) asparagine glycan is attached at Asn47. 28 LRR repeats span residues 64-87, 90-112, 114-137, 138-160, 163-185, 187-209, 235-257, 259-281, 283-304, 330-352, 354-376, 378-400, 402-425, 426-447, 449-471, 473-496, 497-520, 521-543, 545-567, 581-603, 605-628, 629-651, 653-675, 677-697, 701-723, 725-748, 749-772, and 773-795; these read LGRV…EISS, NLRE…IWNL, HLQT…SELP, QLLY…FFIS, ALSS…IGKL, NLSN…IGNI, HLAK…FGEL, NLSI…LGNC, SLKS…ELSE, VLDS…IEDC, MLKH…LCGS, SLEA…FDGC, SLGE…WKLP, LMAL…LWKS, NLME…IGNA, SLKR…GKLT, SLSV…GDCT, SLTT…ITAL, QLQC…PSAY, HHGI…LGEC, VLVE…SRLT, NLTI…MGNS, KLQG…FGLL, SLVK…ASLG, ELTH…LSTM, KLVG…GNLT, QLEY…CGLP, and NLEF…GVCQ. Residues Asn171, Asn187, and Asn208 are each glycosylated (N-linked (GlcNAc...) asparagine). A glycan (N-linked (GlcNAc...) asparagine) is linked at Asn259. N-linked (GlcNAc...) asparagine glycans are attached at residues Asn414 and Asn435. A glycan (N-linked (GlcNAc...) asparagine) is linked at Asn555. Asn629 carries an N-linked (GlcNAc...) asparagine glycan. N-linked (GlcNAc...) asparagine glycans are attached at residues Asn682, Asn711, and Asn746. The helical transmembrane segment at 828 to 848 threads the bilayer; it reads WGIAGLMLGFTIIVFVFVFSL. Residue Thr914 is modified to Phosphothreonine. One can recognise a Protein kinase domain in the interval 917–1192; the sequence is FSKKNIIGDG…LDVLKALKEI (276 aa). Residues 923–931 and Lys945 each bind ATP; that span reads IGDGGFGTV. Residue Tyr990 is modified to Phosphotyrosine. The active-site Proton acceptor is the Asp1043. Tyr1085 is subject to Phosphotyrosine.

Belongs to the protein kinase superfamily. Ser/Thr protein kinase family. Interacts with TPD1. Autophosphorylates in vitro. In terms of tissue distribution, present in young buds, open flowers and siliques but absent from mature leaves and roots. Strongly expressed in the young organ primordia, and as the anthers and ovules developed, became focused in the microsporangia and in the distal and chalazal regions of the ovule. In cv. Landsberg erecta, only expressed in the anthers of young floral buds.

The protein localises to the cell membrane. It carries out the reaction L-seryl-[protein] + ATP = O-phospho-L-seryl-[protein] + ADP + H(+). It catalyses the reaction L-threonyl-[protein] + ATP = O-phospho-L-threonyl-[protein] + ADP + H(+). Functionally, receptor with a serine/threonine-protein kinase activity required for the specification of the correct number of male archesporial initials and for the subsequent specification of tapetal and middle cell layer identities. In seeds, required for enhancing cell size and the rate of embryonic development. The chain is Leucine-rich repeat receptor protein kinase EMS1 from Arabidopsis thaliana (Mouse-ear cress).